The following is a 152-amino-acid chain: METPRPVVSRRPFCCTLKCFVKFLRLVVTVTSMIFFIVGQAPEPYIVITGFEVTVIFCFLVLYTCGLDKIMRSFFWPLLDVINSMVTALCMLIVSVLALIPETSTKTILGGVFGFLTVTCTIADCALMCQKLRFRPRQPYQKKSTNDIDDRE.

The MARVEL domain maps to 13–133 (FCCTLKCFVK…DCALMCQKLR (121 aa)). 4 helical membrane passes run 19-39 (CFVKFLRLVVTVTSMIFFIVG), 46-66 (IVITGFEVTVIFCFLVLYTCG), 81-101 (VINSMVTALCMLIVSVLALIP), and 108-128 (ILGGVFGFLTVTCTIADCALM).

The protein belongs to the chemokine-like factor family. As to expression, ubiquitous.

It is found in the membrane. In terms of biological role, may play an important role in inflammation and regeneration of skeletal muscle. Essential for embryonic development. The sequence is that of Chemokine-like factor (Cklf) from Mus musculus (Mouse).